Here is a 744-residue protein sequence, read N- to C-terminus: Zinc finger protein 366 (744 aa).

The disordered stretch occupies residues 206–228 (KQPPEPLLPRKAEPQESEETKQK). Residues 213–228 (LPRKAEPQESEETKQK) are compositionally biased toward basic and acidic residues. 11 consecutive C2H2-type zinc fingers follow at residues 253–275 (WQCPTCEKSYTSKYNLVTHILGH), 281–303 (HACTHCGKLFKQLSHLHTHMLTH), 309–331 (HKCQVCHKAFTQTSHLKRHMMQH), 337–359 (HNCRVCGRGFAYPSELKAHEAKH), 365–387 (NICVECGLDFPTLAQLKRHLTTH), 393–415 (YNCSECDKTFQYPSQLQNHMMKH), 421–443 (YICSECGMEFVQPHHLKQHSLTH), 449–471 (HKCGICGREFTLLANMKRHVLIH), 477–499 (YQCHLCYKSFVQKQTLKAHMIVH), 505–527 (FKCKLCGKEFNRMHNLMGHMHLH), and 533–556 (FKCLYCPSKFTLKGNLTRHMKVKH). Residues 455–744 (GREFTLLANM…MEKQAVLLGI (290 aa)) form an interaction with NRIP1 region. The short motif at 590 to 594 (PFDLS) is the PXDLS element. Disordered regions lie at residues 603–627 (VFQSDGESAQGSHCHEEEEEDNCYE) and 664–692 (KEEKEDASKGEWEKRSKGDLGAEGGQERD).

As to quaternary structure, interacts with ESR1 and NRIP1. Interacts (via PXDLS motif) with CTBP1. As to expression, expressed in immature and mature dendritic cells (DCs). Not detected in other blood cell types.

The protein resides in the nucleus. Has transcriptional repression activity. Acts as a corepressor of ESR1; the function seems to involve CTBP1 and histone deacetylases. This chain is Zinc finger protein 366, found in Homo sapiens (Human).